We begin with the raw amino-acid sequence, 408 residues long: Arginine biosynthesis bifunctional protein ArgJ (408 aa).

6 residues coordinate substrate: Thr158, Lys184, Thr195, Glu281, Asn403, and Thr408. The active-site Nucleophile is the Thr195.

The protein belongs to the ArgJ family. Heterotetramer of two alpha and two beta chains.

It is found in the cytoplasm. The catalysed reaction is N(2)-acetyl-L-ornithine + L-glutamate = N-acetyl-L-glutamate + L-ornithine. It catalyses the reaction L-glutamate + acetyl-CoA = N-acetyl-L-glutamate + CoA + H(+). It functions in the pathway amino-acid biosynthesis; L-arginine biosynthesis; L-ornithine and N-acetyl-L-glutamate from L-glutamate and N(2)-acetyl-L-ornithine (cyclic): step 1/1. The protein operates within amino-acid biosynthesis; L-arginine biosynthesis; N(2)-acetyl-L-ornithine from L-glutamate: step 1/4. Catalyzes two activities which are involved in the cyclic version of arginine biosynthesis: the synthesis of N-acetylglutamate from glutamate and acetyl-CoA as the acetyl donor, and of ornithine by transacetylation between N(2)-acetylornithine and glutamate. The protein is Arginine biosynthesis bifunctional protein ArgJ of Bacillus cereus (strain ZK / E33L).